We begin with the raw amino-acid sequence, 116 residues long: NADH-ubiquinone oxidoreductase chain 3 (116 aa).

3 helical membrane passes run 3-23 (LIMTILTITAALSLILATVSF), 56-76 (FFLVAILFLLFDLEIALLLPL), and 87-107 (GTFFWATTVLILLTLGLIYEW).

Belongs to the complex I subunit 3 family.

The protein localises to the mitochondrion membrane. The catalysed reaction is a ubiquinone + NADH + 5 H(+)(in) = a ubiquinol + NAD(+) + 4 H(+)(out). Its function is as follows. Core subunit of the mitochondrial membrane respiratory chain NADH dehydrogenase (Complex I) that is believed to belong to the minimal assembly required for catalysis. Complex I functions in the transfer of electrons from NADH to the respiratory chain. The immediate electron acceptor for the enzyme is believed to be ubiquinone. The sequence is that of NADH-ubiquinone oxidoreductase chain 3 (MT-ND3) from Carassius auratus (Goldfish).